The primary structure comprises 145 residues: uncharacterized protein (145 aa).

3 helical membrane passes run 3-23 (VGII…GIGG), 83-103 (YVID…YLVP), and 105-125 (LSLL…MLWI).

It localises to the cell membrane. This is an uncharacterized protein from Methanocaldococcus jannaschii (strain ATCC 43067 / DSM 2661 / JAL-1 / JCM 10045 / NBRC 100440) (Methanococcus jannaschii).